A 462-amino-acid polypeptide reads, in one-letter code: DNA polymerase delta subunit 3 (462 aa).

A2 bears the N-acetylalanine mark. Disordered regions lie at residues 144-186 (APAE…ASQQ), 200-230 (TKTQDTNKETKPEAREVTSASSAGGKAPGKG), 254-384 (AVKE…RVLK), and 403-462 (SESC…FQKK). Positions 156–174 (QSNLQAASEAQASELTTNG) are enriched in polar residues. Basic and acidic residues predominate over residues 204–215 (DTNKETKPEARE). Over residues 218–230 (SASSAGGKAPGKG) the composition is skewed to low complexity. A Glycyl lysine isopeptide (Lys-Gly) (interchain with G-Cter in SUMO); alternate cross-link involves residue K256. Residue K256 forms a Glycyl lysine isopeptide (Lys-Gly) (interchain with G-Cter in SUMO2); alternate linkage. Residue K259 forms a Glycyl lysine isopeptide (Lys-Gly) (interchain with G-Cter in SUMO2) linkage. The segment covering 284-305 (RKSEPGKVQQKEKSSRGKRVDL) has biased composition (basic and acidic residues). At S306 the chain carries Phosphoserine. The segment covering 330–344 (SSEDEVFEDSPEMYE) has biased composition (acidic residues). Over residues 348–368 (PSPPPVSPPPDPMPKTEPPPV) the composition is skewed to pro residues. Residues S403 and S405 each carry the phosphoserine modification. Residue T407 is modified to Phosphothreonine. The residue at position 409 (S409) is a Phosphoserine. A compositionally biased stretch (low complexity) spans 416 to 427 (KPASAHKPPAAA). A compositionally biased stretch (basic and acidic residues) spans 428-437 (VKREPREERK). K429 participates in a covalent cross-link: Glycyl lysine isopeptide (Lys-Gly) (interchain with G-Cter in SUMO); alternate. A Glycyl lysine isopeptide (Lys-Gly) (interchain with G-Cter in SUMO2); alternate cross-link involves residue K429. Polar residues predominate over residues 451–462 (RQVSITGFFQKK). The short motif at 452-459 (QVSITGFF) is the PIP-box element. S454 carries the post-translational modification Phosphoserine.

As to quaternary structure, component of both the DNA polymerase delta and DNA polymerase zeta complexes. The tetrameric DNA polymerase delta complex (Pol-delta4), which consists of POLD1/p125, POLD2/p50, POLD3/p66/p68 and POLD4/p12, with POLD1 bearing DNA polymerase and 3' to 5' proofreading exonuclease activities. Within this complex, directly interacts with POLD2. Following stress caused by DNA damaging agents or by replication stress, POLD4 is degraded and Pol-delta4 is converted into a trimeric form of the complex (Pol-delta3), which consists of POLD1, POLD2 and POLD3. Pol-delta3 is the major form occurring at S phase replication sites, as well as DNA damage sites. Directly interacts with PCNA, as do POLD1 and POLD4; this interaction stimulates Pol-delta polymerase activity. POLD3 phosphorylation at Ser-454 impairs PCNA binding. Component of the DNA polymerase zeta complex (POLZ), which consists of REV3L, MAD2L2, POLD2 and POLD3, with REV3L bearing DNA polymerase catalytic activity. The DNA polymerase delta complex interacts with POLDIP2; this interaction is probably mediated through direct binding to POLD2. In terms of processing, ubiquitinated, but not targeted to the proteasome. Sumoylated. Sumoylation by SUMO3 may be predominant. Post-translationally, phosphorylation at Ser-454 is thought to decrease the affinity for PCNA and Pol-delta4 processivity. May be phosphorylated by CDK1-cyclin-A complex, as well as CDK2-cyclin-A and CDK2-cyclin-E complexes. PCNA interferes with CDK-cyclin phosphorylation.

It is found in the cytoplasm. Its subcellular location is the nucleus. Its function is as follows. Accessory component of both the DNA polymerase delta complex and the DNA polymerase zeta complex. As a component of the trimeric and tetrameric DNA polymerase delta complexes (Pol-delta3 and Pol-delta4, respectively), plays a role in high fidelity genome replication, including in lagging strand synthesis, and repair. Required for optimal Pol-delta activity. Stabilizes the Pol-delta complex and plays a major role in Pol-delta stimulation by PCNA. Pol-delta3 and Pol-delta4 are characterized by the absence or the presence of POLD4. They exhibit differences in catalytic activity. Most notably, Pol-delta3 shows higher proofreading activity than Pol-delta4. Although both Pol-delta3 and Pol-delta4 process Okazaki fragments in vitro, Pol-delta3 may also be better suited to fulfill this task, exhibiting near-absence of strand displacement activity compared to Pol-delta4 and stalling on encounter with the 5'-blocking oligonucleotides. Pol-delta3 idling process may avoid the formation of a gap, while maintaining a nick that can be readily ligated. Along with DNA polymerase kappa, DNA polymerase delta carries out approximately half of nucleotide excision repair (NER) synthesis following UV irradiation. In this context, POLD3, along with PCNA and RFC1-replication factor C complex, is required to recruit POLD1, the catalytic subunit of the polymerase delta complex, to DNA damage sites. Under conditions of DNA replication stress, required for the repair of broken replication forks through break-induced replication (BIR). Involved in the translesion synthesis (TLS) of templates carrying O6-methylguanine or abasic sites performed by Pol-delta4, independently of DNA polymerase zeta (REV3L) or eta (POLH). Facilitates abasic site bypass by DNA polymerase delta by promoting extension from the nucleotide inserted opposite the lesion. Also involved in TLS, as a component of the tetrameric DNA polymerase zeta complex. Along with POLD2, dramatically increases the efficiency and processivity of DNA synthesis of the DNA polymerase zeta complex compared to the minimal zeta complex, consisting of only REV3L and REV7. This chain is DNA polymerase delta subunit 3 (Pold3), found in Mus musculus (Mouse).